A 96-amino-acid polypeptide reads, in one-letter code: UPF0166 protein aq_448 (96 aa).

This sequence belongs to the UPF0166 family.

This chain is UPF0166 protein aq_448, found in Aquifex aeolicus (strain VF5).